The primary structure comprises 133 residues: uncharacterized protein (133 aa).

The next 2 helical transmembrane spans lie at phenylalanine 13–serine 33 and phenylalanine 73–leucine 93.

It is found in the membrane. This is an uncharacterized protein from Saccharomyces cerevisiae (strain ATCC 204508 / S288c) (Baker's yeast).